The following is a 691-amino-acid chain: DNA ligase (691 aa).

NAD(+) is bound by residues 41 to 45 (DAEYD), 90 to 91 (SL), and E130. K132 (N6-AMP-lysine intermediate) is an active-site residue. 4 residues coordinate NAD(+): R153, E190, K307, and K331. Positions 425, 428, 443, and 449 each coordinate Zn(2+). The region spanning 610–691 (APQGVLAGKT…LHQLLEGNTP (82 aa)) is the BRCT domain.

The protein belongs to the NAD-dependent DNA ligase family. LigA subfamily. It depends on Mg(2+) as a cofactor. Mn(2+) is required as a cofactor.

The catalysed reaction is NAD(+) + (deoxyribonucleotide)n-3'-hydroxyl + 5'-phospho-(deoxyribonucleotide)m = (deoxyribonucleotide)n+m + AMP + beta-nicotinamide D-nucleotide.. In terms of biological role, DNA ligase that catalyzes the formation of phosphodiester linkages between 5'-phosphoryl and 3'-hydroxyl groups in double-stranded DNA using NAD as a coenzyme and as the energy source for the reaction. It is essential for DNA replication and repair of damaged DNA. This is DNA ligase from Burkholderia cenocepacia (strain HI2424).